The following is a 284-amino-acid chain: Ribosomal RNA small subunit methyltransferase A (284 aa).

The S-adenosyl-L-methionine site is built by His-23, Leu-25, Gly-50, Glu-71, Asp-92, and Asn-121.

It belongs to the class I-like SAM-binding methyltransferase superfamily. rRNA adenine N(6)-methyltransferase family. RsmA subfamily.

Its subcellular location is the cytoplasm. It carries out the reaction adenosine(1518)/adenosine(1519) in 16S rRNA + 4 S-adenosyl-L-methionine = N(6)-dimethyladenosine(1518)/N(6)-dimethyladenosine(1519) in 16S rRNA + 4 S-adenosyl-L-homocysteine + 4 H(+). Its function is as follows. Specifically dimethylates two adjacent adenosines (A1518 and A1519) in the loop of a conserved hairpin near the 3'-end of 16S rRNA in the 30S particle. May play a critical role in biogenesis of 30S subunits. This chain is Ribosomal RNA small subunit methyltransferase A, found in Verminephrobacter eiseniae (strain EF01-2).